An 82-amino-acid polypeptide reads, in one-letter code: Small ribosomal subunit protein uS17 (82 aa).

The protein belongs to the universal ribosomal protein uS17 family. As to quaternary structure, part of the 30S ribosomal subunit.

One of the primary rRNA binding proteins, it binds specifically to the 5'-end of 16S ribosomal RNA. This is Small ribosomal subunit protein uS17 from Rickettsia typhi (strain ATCC VR-144 / Wilmington).